The sequence spans 362 residues: Histidinol-phosphate aminotransferase (362 aa).

Residue Lys-218 is modified to N6-(pyridoxal phosphate)lysine.

The protein belongs to the class-II pyridoxal-phosphate-dependent aminotransferase family. Histidinol-phosphate aminotransferase subfamily. Homodimer. Requires pyridoxal 5'-phosphate as cofactor.

The enzyme catalyses L-histidinol phosphate + 2-oxoglutarate = 3-(imidazol-4-yl)-2-oxopropyl phosphate + L-glutamate. The protein operates within amino-acid biosynthesis; L-histidine biosynthesis; L-histidine from 5-phospho-alpha-D-ribose 1-diphosphate: step 7/9. The polypeptide is Histidinol-phosphate aminotransferase (Xanthomonas campestris pv. campestris (strain 8004)).